Here is a 311-residue protein sequence, read N- to C-terminus: Methionyl-tRNA formyltransferase (311 aa).

A (6S)-5,6,7,8-tetrahydrofolate-binding site is contributed by 111 to 114 (SLLP).

The protein belongs to the Fmt family.

The enzyme catalyses L-methionyl-tRNA(fMet) + (6R)-10-formyltetrahydrofolate = N-formyl-L-methionyl-tRNA(fMet) + (6S)-5,6,7,8-tetrahydrofolate + H(+). Its function is as follows. Attaches a formyl group to the free amino group of methionyl-tRNA(fMet). The formyl group appears to play a dual role in the initiator identity of N-formylmethionyl-tRNA by promoting its recognition by IF2 and preventing the misappropriation of this tRNA by the elongation apparatus. The polypeptide is Methionyl-tRNA formyltransferase (Caldicellulosiruptor saccharolyticus (strain ATCC 43494 / DSM 8903 / Tp8T 6331)).